Here is a 399-residue protein sequence, read N- to C-terminus: CLOCK-interacting pacemaker (399 aa).

Residues 1-12 are compositionally biased toward basic and acidic residues; that stretch reads MERKNSSRESPR. Disordered regions lie at residues 1 to 85 and 159 to 224; these read MERK…AKNA and SYTK…KLAE. Ser-213 carries the post-translational modification Phosphoserine. Positions 333–359 form a coiled coil; the sequence is TLKTKELIRQNQATQVELDQLKEQTQL. Polar residues predominate over residues 378–388; it reads SLTPGSSNTGS. Residues 378–399 form a disordered region; it reads SLTPGSSNTGSDLEAFSDHPDI.

As to quaternary structure, interacts with CLOCK. Forms a ternary complex with the CLOCK-BMAL1 heterodimer. Interacts with CAD and HSPA5.

It localises to the nucleus. The protein localises to the cytoplasm. Its subcellular location is the cytosol. In terms of biological role, transcriptional repressor which may act as a negative-feedback regulator of CLOCK-BMAL1 transcriptional activity in the circadian-clock mechanism. May stimulate BMAL1-dependent phosphorylation of CLOCK. However, the physiological relevance of these observations is unsure, since experiments in knockout mice showed that CIPC is not critially required for basic circadian clock. The sequence is that of CLOCK-interacting pacemaker (CIPC) from Pongo abelii (Sumatran orangutan).